We begin with the raw amino-acid sequence, 151 residues long: Large ribosomal subunit protein uL15 (151 aa).

Residues 1 to 51 are disordered; it reads MPLKIEDLKPTPGSRKPKKRLGRGIGSGLGKTAGKGHKGEKARGRGKIGRT. Over residues 23–33 the composition is skewed to gly residues; sequence RGIGSGLGKTA.

The protein belongs to the universal ribosomal protein uL15 family. As to quaternary structure, part of the 50S ribosomal subunit.

In terms of biological role, binds to the 23S rRNA. This is Large ribosomal subunit protein uL15 from Petrotoga mobilis (strain DSM 10674 / SJ95).